The chain runs to 215 residues: MCQSRYLLFLATLVLLNHLTSARVIPVSGPAKCLNQSQNLLKTTDDMVRTAREKLKHYSCTAGDIDHEDITRDKTSTLEACLPLELHKNESCLATKETSSIIRGSCLPPQKTSLMMTLCLGSIYEDLKMYQSEFQAINAALQSHNHQQITLDRNMLMAIDELMRSLNHSGETLHQKAPMGEADPYRVKMKLCILLHAFSTRVMTINRVMNYLSSS.

An N-terminal signal peptide occupies residues methionine 1–alanine 22. 3 disulfides stabilise this stretch: cysteine 33/cysteine 106, cysteine 60/cysteine 192, and cysteine 81/cysteine 119. N-linked (GlcNAc...) asparagine glycans are attached at residues asparagine 35, asparagine 89, and asparagine 167.

The protein belongs to the IL-6 superfamily. As to quaternary structure, heterodimer with IL12B; disulfide-linked. This heterodimer is known as interleukin IL-12. Heterodimer with EBI3/IL27B; not disulfide-linked. This heterodimer is known as interleukin IL-35. Interacts with NBR1; this interaction promotes IL-12 secretion.

The protein localises to the secreted. Heterodimerizes with IL12B to form the IL-12 cytokine or with EBI3/IL27B to form the IL-35 cytokine. IL-12 is primarily produced by professional antigen-presenting cells (APCs) such as B-cells and dendritic cells (DCs) as well as macrophages and granulocytes and regulates T-cell and natural killer-cell responses, induces the production of interferon-gamma (IFN-gamma), favors the differentiation of T-helper 1 (Th1) cells and is an important link between innate resistance and adaptive immunity. Mechanistically, exerts its biological effects through a receptor composed of IL12R1 and IL12R2 subunits. Binding to the receptor results in the rapid tyrosine phosphorylation of a number of cellular substrates including the JAK family kinases TYK2 and JAK2. In turn, recruited STAT4 gets phosphorylated and translocates to the nucleus where it regulates cytokine/growth factor responsive genes. As part of IL-35, plays essential roles in maintaining the immune homeostasis of the liver microenvironment and also functions as an immune-suppressive cytokine. Mediates biological events through unconventional receptors composed of IL12RB2 and gp130/IL6ST heterodimers or homodimers. Signaling requires the transcription factors STAT1 and STAT4, which form a unique heterodimer that binds to distinct DNA sites. This is Interleukin-12 subunit alpha (Il12a) from Rattus norvegicus (Rat).